Consider the following 204-residue polypeptide: Glycerol-3-phosphate acyltransferase (204 aa).

The next 5 helical transmembrane spans lie at 8–28 (ILIFAYLLGSINSAIIVCYIF), 53–73 (VPAAITLIFDILKGLVPVVIA), 81–101 (FITACTALYAILGHIFPIFFG), 116–136 (FGFSWILGLIFVITWLCVAII), and 155–175 (VIFTSDLQVAAPFLIIAIIIL).

It belongs to the PlsY family. Probably interacts with PlsX.

The protein localises to the cell inner membrane. The catalysed reaction is an acyl phosphate + sn-glycerol 3-phosphate = a 1-acyl-sn-glycero-3-phosphate + phosphate. The protein operates within lipid metabolism; phospholipid metabolism. Functionally, catalyzes the transfer of an acyl group from acyl-phosphate (acyl-PO(4)) to glycerol-3-phosphate (G3P) to form lysophosphatidic acid (LPA). This enzyme utilizes acyl-phosphate as fatty acyl donor, but not acyl-CoA or acyl-ACP. This is Glycerol-3-phosphate acyltransferase from Francisella tularensis subsp. novicida (strain U112).